Reading from the N-terminus, the 897-residue chain is Schlafen family member 13 (897 aa).

The segment at 2–355 (EANHCSLGVY…WVEKMMDADP (354 aa)) is n'-domain region. Active-site residues include Glu208 and Glu213. Positions 284, 286, and 321 each coordinate Zn(2+). ATP is bound at residue 599–606 (GLPGSGKT).

It belongs to the Schlafen family. Subgroup III subfamily. It depends on Mg(2+) as a cofactor.

The protein localises to the cytoplasm. Endoribonuclease that cleaves tRNAs and rRNAs. Cleaves tRNAs 11 nucleotides from the 3'-terminus at the acceptor stem. Does not act on tRNA(Sec). Able to restrict HIV-1 virus replication; ability to inhibit HIV-1 replication is dependent on endoribonuclease activity. The polypeptide is Schlafen family member 13 (Homo sapiens (Human)).